Consider the following 244-residue polypeptide: Tyrosine recombinase XerD-like (244 aa).

The Core-binding (CB) domain maps to 1-73 (MRDRISAFLE…ACNQFLYFLY (73 aa)). The Tyr recombinase domain maps to 90-244 (AEKKTEKPEI…KTVLTLEKYR (155 aa)). Active-site residues include Lys-150 and Arg-211. Tyr-243 (O-(3'-phospho-DNA)-tyrosine intermediate) is an active-site residue.

Belongs to the 'phage' integrase family. XerD-like subfamily.

The protein resides in the cytoplasm. Putative tyrosine recombinase. Not involved in the cutting and rejoining of the recombining DNA molecules on dif(SL) site. The sequence is that of Tyrosine recombinase XerD-like from Streptococcus pneumoniae serotype 2 (strain D39 / NCTC 7466).